A 547-amino-acid chain; its full sequence is Chaperonin GroEL (547 aa).

Residues 30 to 33 (TLGP), lysine 51, 87 to 91 (DGTTT), glycine 415, 479 to 481 (NAA), and aspartate 495 each bind ATP.

This sequence belongs to the chaperonin (HSP60) family. In terms of assembly, forms a cylinder of 14 subunits composed of two heptameric rings stacked back-to-back. Interacts with the co-chaperonin GroES.

The protein resides in the cytoplasm. The enzyme catalyses ATP + H2O + a folded polypeptide = ADP + phosphate + an unfolded polypeptide.. Its function is as follows. Together with its co-chaperonin GroES, plays an essential role in assisting protein folding. The GroEL-GroES system forms a nano-cage that allows encapsulation of the non-native substrate proteins and provides a physical environment optimized to promote and accelerate protein folding. The protein is Chaperonin GroEL of Pseudomonas aeruginosa (strain UCBPP-PA14).